A 208-amino-acid chain; its full sequence is Small ribosomal subunit protein uS5 (208 aa).

The span at 1 to 15 shows a compositional bias: polar residues; that stretch reads MTDSNNQSPNKKTSG. Residues 1–54 form a disordered region; sequence MTDSNNQSPNKKTSGSSSAPPAADGRQENRRSRGEKRGGRRDRRGQERDSEWQE. Basic and acidic residues-rich tracts occupy residues 25–37 and 44–54; these read GRQENRRSRGEKR and RGQERDSEWQE. The 64-residue stretch at 52–115 folds into the S5 DRBM domain; the sequence is WQERVVQIRR…ADGKKHLVRV (64 aa).

Belongs to the universal ribosomal protein uS5 family. Part of the 30S ribosomal subunit. Contacts proteins S4 and S8.

In terms of biological role, with S4 and S12 plays an important role in translational accuracy. Located at the back of the 30S subunit body where it stabilizes the conformation of the head with respect to the body. The polypeptide is Small ribosomal subunit protein uS5 (Prochlorococcus marinus (strain NATL2A)).